Here is a 194-residue protein sequence, read N- to C-terminus: Phosphoheptose isomerase (194 aa).

The SIS domain occupies Ile-37 to Asn-194. Asn-52–Gly-54 serves as a coordination point for substrate. Residues His-61 and Glu-65 each coordinate Zn(2+). Substrate is bound by residues Glu-65, Asn-93–Asp-94, Ser-119–Ser-121, Ser-124, and Gln-172. Zn(2+)-binding residues include Gln-172 and His-180.

The protein belongs to the SIS family. GmhA subfamily. In terms of assembly, homotetramer. It depends on Zn(2+) as a cofactor.

The protein resides in the cytoplasm. It catalyses the reaction 2 D-sedoheptulose 7-phosphate = D-glycero-alpha-D-manno-heptose 7-phosphate + D-glycero-beta-D-manno-heptose 7-phosphate. It functions in the pathway carbohydrate biosynthesis; D-glycero-D-manno-heptose 7-phosphate biosynthesis; D-glycero-alpha-D-manno-heptose 7-phosphate and D-glycero-beta-D-manno-heptose 7-phosphate from sedoheptulose 7-phosphate: step 1/1. Catalyzes the isomerization of sedoheptulose 7-phosphate in D-glycero-D-manno-heptose 7-phosphate. This is Phosphoheptose isomerase from Buchnera aphidicola subsp. Schizaphis graminum (strain Sg).